Reading from the N-terminus, the 439-residue chain is Histidinol dehydrogenase (439 aa).

Residues Tyr127, Gln185, and Asn208 each contribute to the NAD(+) site. Substrate is bound by residues Ser234, Gln256, and His259. Gln256 and His259 together coordinate Zn(2+). Active-site proton acceptor residues include Glu323 and His324. Residues His324, Asp357, Glu411, and His416 each contribute to the substrate site. Position 357 (Asp357) interacts with Zn(2+). Zn(2+) is bound at residue His416.

The protein belongs to the histidinol dehydrogenase family. Zn(2+) serves as cofactor.

The enzyme catalyses L-histidinol + 2 NAD(+) + H2O = L-histidine + 2 NADH + 3 H(+). It functions in the pathway amino-acid biosynthesis; L-histidine biosynthesis; L-histidine from 5-phospho-alpha-D-ribose 1-diphosphate: step 9/9. In terms of biological role, catalyzes the sequential NAD-dependent oxidations of L-histidinol to L-histidinaldehyde and then to L-histidine. The protein is Histidinol dehydrogenase of Aliivibrio fischeri (strain ATCC 700601 / ES114) (Vibrio fischeri).